The primary structure comprises 436 residues: Trigger factor (436 aa).

The PPIase FKBP-type domain maps to 161 to 246 (GDQLNIDFVG…VNSVSAPQLP (86 aa)).

This sequence belongs to the FKBP-type PPIase family. Tig subfamily.

It localises to the cytoplasm. It carries out the reaction [protein]-peptidylproline (omega=180) = [protein]-peptidylproline (omega=0). Involved in protein export. Acts as a chaperone by maintaining the newly synthesized protein in an open conformation. Functions as a peptidyl-prolyl cis-trans isomerase. The polypeptide is Trigger factor (Ectopseudomonas mendocina (strain ymp) (Pseudomonas mendocina)).